Here is a 131-residue protein sequence, read N- to C-terminus: Cytochrome b5 (131 aa).

One can recognise a Cytochrome b5 heme-binding domain in the interval Ala3–Asp79. Heme is bound by residues His38 and His62. The chain crosses the membrane as a helical span at residues Ile108 to Ile125.

The protein belongs to the cytochrome b5 family.

The protein resides in the endoplasmic reticulum membrane. Its subcellular location is the microsome membrane. Membrane bound hemoprotein which function as an electron carrier for several membrane bound oxygenases. This is Cytochrome b5 from Rhizopus stolonifer (Rhizopus nigricans).